A 300-amino-acid chain; its full sequence is ClpXP adapter protein SpxH (300 aa).

This sequence belongs to the SpxH family. Interacts with Spx.

It localises to the cytoplasm. In terms of biological role, adapter protein required for efficient degradation of Spx by ClpXP under non-stress conditions. Interaction with Spx stabilizes Spx and exposes the C-terminus of Spx for recognition and proteolysis by ClpXP. This Shouchella clausii (strain KSM-K16) (Alkalihalobacillus clausii) protein is ClpXP adapter protein SpxH.